The chain runs to 927 residues: DNA mismatch repair protein MutS (927 aa).

646–653 serves as a coordination point for ATP; sequence GPNMAGKS. The tract at residues 904 to 927 is disordered; sequence SAQPGSAEQGESPDKHDEGKNSRG. The span at 915-927 shows a compositional bias: basic and acidic residues; the sequence is SPDKHDEGKNSRG.

Belongs to the DNA mismatch repair MutS family.

Its function is as follows. This protein is involved in the repair of mismatches in DNA. It is possible that it carries out the mismatch recognition step. This protein has a weak ATPase activity. In Desulfovibrio desulfuricans (strain ATCC 27774 / DSM 6949 / MB), this protein is DNA mismatch repair protein MutS.